Reading from the N-terminus, the 851-residue chain is DNA mismatch repair protein MutS (851 aa).

ATP is bound at residue 614-621 (GPNMGGKS).

The protein belongs to the DNA mismatch repair MutS family.

This protein is involved in the repair of mismatches in DNA. It is possible that it carries out the mismatch recognition step. This protein has a weak ATPase activity. The chain is DNA mismatch repair protein MutS from Serratia proteamaculans (strain 568).